The sequence spans 335 residues: Dihydroorotate dehydrogenase (quinone) (335 aa).

FMN is bound by residues 58–62 (AGADK) and Thr82. Lys62 contacts substrate. Residue 107-111 (NRNGF) participates in substrate binding. FMN-binding residues include Asn135 and Asn168. Asn168 provides a ligand contact to substrate. Ser171 acts as the Nucleophile in catalysis. Asn173 provides a ligand contact to substrate. 2 residues coordinate FMN: Lys213 and Gly241. 242–243 (NT) serves as a coordination point for substrate. Residues Gly264, Gly293, and 314 to 315 (YS) contribute to the FMN site.

It belongs to the dihydroorotate dehydrogenase family. Type 2 subfamily. As to quaternary structure, monomer. The cofactor is FMN.

It localises to the cell membrane. The catalysed reaction is (S)-dihydroorotate + a quinone = orotate + a quinol. The protein operates within pyrimidine metabolism; UMP biosynthesis via de novo pathway; orotate from (S)-dihydroorotate (quinone route): step 1/1. Its function is as follows. Catalyzes the conversion of dihydroorotate to orotate with quinone as electron acceptor. The polypeptide is Dihydroorotate dehydrogenase (quinone) (Actinobacillus pleuropneumoniae serotype 5b (strain L20)).